We begin with the raw amino-acid sequence, 149 residues long: MKVIFLKDVKGKGKKGEIKNVADGYANNFLFKQGLAIEATPANIKALEAQKRKEQRQAEEELAKAKQLKEKLEQITVELSAKAGEGGRLFGSITSKQIAEVLQSQHQIKIDKRKIELDDAIRSLGYTNVPVKLHPEVTATLKVHVTEQK.

Belongs to the bacterial ribosomal protein bL9 family.

Functionally, binds to the 23S rRNA. The sequence is that of Large ribosomal subunit protein bL9 from Geobacillus sp. (strain WCH70).